The chain runs to 99 residues: Protein Tat (99 aa).

Residues M1 to C22 form a disordered region. Positions M1 to K24 are interaction with human CREBBP. The transactivation stretch occupies residues M1–G48. Residues C22, C25, and C27 each contribute to the Zn(2+) site. Residues C22–C37 are cysteine-rich. N6-acetyllysine; by host PCAF is present on K28. Zn(2+)-binding residues include C30, H33, C34, and C37. Positions F38–G48 are core. Residues G48–P99 form a disordered region. A Nuclear localization signal, RNA-binding (TAR), and protein transduction motif is present at residues R49 to G57. The segment at R49–E86 is interaction with the host capping enzyme RNGTT. N6-acetyllysine; by host EP300 and GCN5L2 occurs at positions 50 and 51. 2 positions are modified to asymmetric dimethylarginine; by host PRMT6: R52 and R53. K71 participates in a covalent cross-link: Glycyl lysine isopeptide (Lys-Gly) (interchain with G-Cter in ubiquitin). A Cell attachment site motif is present at residues R78–D80. A compositionally biased stretch (basic and acidic residues) spans G83 to S93.

This sequence belongs to the lentiviruses Tat family. In terms of assembly, interacts with host CCNT1. Associates with the P-TEFb complex composed at least of Tat, P-TEFb (CDK9 and CCNT1), TAR RNA, RNA Pol II. Recruits the HATs CREBBP, TAF1/TFIID, EP300, PCAF and GCN5L2. Interacts with host KAT5/Tip60; this interaction targets the latter to degradation. Interacts with the host deacetylase SIRT1. Interacts with host capping enzyme RNGTT; this interaction stimulates RNGTT. Binds to host KDR, and to the host integrins ITGAV/ITGB3 and ITGA5/ITGB1. Interacts with host KPNB1/importin beta-1 without previous binding to KPNA1/importin alpha-1. Interacts with EIF2AK2. Interacts with host nucleosome assembly protein NAP1L1; this interaction may be required for the transport of Tat within the nucleus, since the two proteins interact at the nuclear rim. Interacts with host C1QBP/SF2P32; this interaction involves lysine-acetylated Tat. Interacts with the host chemokine receptors CCR2, CCR3 and CXCR4. Interacts with host DPP4/CD26; this interaction may trigger an anti-proliferative effect. Interacts with host LDLR. Interacts with the host extracellular matrix metalloproteinase MMP1. Interacts with host PRMT6; this interaction mediates Tat's methylation. Interacts with, and is ubiquitinated by MDM2/Hdm2. Interacts with host PSMC3 and HTATIP2. Interacts with STAB1; this interaction may overcome SATB1-mediated repression of IL2 and IL2RA (interleukin) in T cells by binding to the same domain than HDAC1. Interacts (when acetylated) with human CDK13, thereby increasing HIV-1 mRNA splicing and promoting the production of the doubly spliced HIV-1 protein Nef. Interacts with host TBP; this interaction modulates the activity of transcriptional pre-initiation complex. Interacts with host RELA. Interacts with host PLSCR1; this interaction negatively regulates Tat transactivation activity by altering its subcellular distribution. Post-translationally, asymmetrical arginine methylation by host PRMT6 seems to diminish the transactivation capacity of Tat and affects the interaction with host CCNT1. Acetylation by EP300, CREBBP, GCN5L2/GCN5 and PCAF regulates the transactivation activity of Tat. EP300-mediated acetylation of Lys-50 promotes dissociation of Tat from the TAR RNA through the competitive binding to PCAF's bromodomain. In addition, the non-acetylated Tat's N-terminus can also interact with PCAF. PCAF-mediated acetylation of Lys-28 enhances Tat's binding to CCNT1. Lys-50 is deacetylated by SIRT1. In terms of processing, polyubiquitination by host MDM2 does not target Tat to degradation, but activates its transactivation function and fosters interaction with CCNT1 and TAR RNA. Post-translationally, phosphorylated by EIF2AK2 on serine and threonine residues adjacent to the basic region important for TAR RNA binding and function. Phosphorylation of Tat by EIF2AK2 is dependent on the prior activation of EIF2AK2 by dsRNA.

Its subcellular location is the host nucleus. It is found in the host nucleolus. The protein localises to the host cytoplasm. It localises to the secreted. In terms of biological role, transcriptional activator that increases RNA Pol II processivity, thereby increasing the level of full-length viral transcripts. Recognizes a hairpin structure at the 5'-LTR of the nascent viral mRNAs referred to as the transactivation responsive RNA element (TAR) and recruits the cyclin T1-CDK9 complex (P-TEFb complex) that will in turn hyperphosphorylate the RNA polymerase II to allow efficient elongation. The CDK9 component of P-TEFb and other Tat-activated kinases hyperphosphorylate the C-terminus of RNA Pol II that becomes stabilized and much more processive. Other factors such as HTATSF1/Tat-SF1, SUPT5H/SPT5, and HTATIP2 are also important for Tat's function. Besides its effect on RNA Pol II processivity, Tat induces chromatin remodeling of proviral genes by recruiting the histone acetyltransferases (HATs) CREBBP, EP300 and PCAF to the chromatin. This also contributes to the increase in proviral transcription rate, especially when the provirus integrates in transcriptionally silent region of the host genome. To ensure maximal activation of the LTR, Tat mediates nuclear translocation of NF-kappa-B by interacting with host RELA. Through its interaction with host TBP, Tat may also modulate transcription initiation. Tat can reactivate a latently infected cell by penetrating in it and transactivating its LTR promoter. In the cytoplasm, Tat is thought to act as a translational activator of HIV-1 mRNAs. Its function is as follows. Extracellular circulating Tat can be endocytosed by surrounding uninfected cells via the binding to several surface receptors such as CD26, CXCR4, heparan sulfate proteoglycans (HSPG) or LDLR. Neurons are rarely infected, but they internalize Tat via their LDLR. Through its interaction with nuclear HATs, Tat is potentially able to control the acetylation-dependent cellular gene expression. Modulates the expression of many cellular genes involved in cell survival, proliferation or in coding for cytokines or cytokine receptors. Tat plays a role in T-cell and neurons apoptosis. Tat induced neurotoxicity and apoptosis probably contribute to neuroAIDS. Circulating Tat also acts as a chemokine-like and/or growth factor-like molecule that binds to specific receptors on the surface of the cells, affecting many cellular pathways. In the vascular system, Tat binds to ITGAV/ITGB3 and ITGA5/ITGB1 integrins dimers at the surface of endothelial cells and competes with bFGF for heparin-binding sites, leading to an excess of soluble bFGF. In Homo sapiens (Human), this protein is Protein Tat.